The sequence spans 293 residues: 4-diphosphocytidyl-2-C-methyl-D-erythritol kinase (293 aa).

K16 is a catalytic residue. 99 to 109 (PMGAGLGGGSS) is an ATP binding site. D141 is an active-site residue.

This sequence belongs to the GHMP kinase family. IspE subfamily.

It catalyses the reaction 4-CDP-2-C-methyl-D-erythritol + ATP = 4-CDP-2-C-methyl-D-erythritol 2-phosphate + ADP + H(+). The protein operates within isoprenoid biosynthesis; isopentenyl diphosphate biosynthesis via DXP pathway; isopentenyl diphosphate from 1-deoxy-D-xylulose 5-phosphate: step 3/6. In terms of biological role, catalyzes the phosphorylation of the position 2 hydroxy group of 4-diphosphocytidyl-2C-methyl-D-erythritol. In Paraburkholderia xenovorans (strain LB400), this protein is 4-diphosphocytidyl-2-C-methyl-D-erythritol kinase.